We begin with the raw amino-acid sequence, 142 residues long: Large ribosomal subunit protein uL13 (142 aa).

The protein belongs to the universal ribosomal protein uL13 family. Part of the 50S ribosomal subunit.

Its function is as follows. This protein is one of the early assembly proteins of the 50S ribosomal subunit, although it is not seen to bind rRNA by itself. It is important during the early stages of 50S assembly. The polypeptide is Large ribosomal subunit protein uL13 (Citrifermentans bemidjiense (strain ATCC BAA-1014 / DSM 16622 / JCM 12645 / Bem) (Geobacter bemidjiensis)).